The primary structure comprises 324 residues: 4-hydroxy-3-methylbut-2-enyl diphosphate reductase (324 aa).

Cysteine 28 is a binding site for [4Fe-4S] cluster. Histidine 57 and histidine 90 together coordinate (2E)-4-hydroxy-3-methylbut-2-enyl diphosphate. Dimethylallyl diphosphate is bound by residues histidine 57 and histidine 90. Residues histidine 57 and histidine 90 each contribute to the isopentenyl diphosphate site. Cysteine 112 is a [4Fe-4S] cluster binding site. A (2E)-4-hydroxy-3-methylbut-2-enyl diphosphate-binding site is contributed by histidine 140. Histidine 140 contacts dimethylallyl diphosphate. An isopentenyl diphosphate-binding site is contributed by histidine 140. Catalysis depends on glutamate 142, which acts as the Proton donor. Threonine 180 serves as a coordination point for (2E)-4-hydroxy-3-methylbut-2-enyl diphosphate. Cysteine 210 is a binding site for [4Fe-4S] cluster. Residues serine 238, serine 239, asparagine 240, and serine 282 each contribute to the (2E)-4-hydroxy-3-methylbut-2-enyl diphosphate site. Serine 238, serine 239, asparagine 240, and serine 282 together coordinate dimethylallyl diphosphate. Residues serine 238, serine 239, asparagine 240, and serine 282 each contribute to the isopentenyl diphosphate site.

The protein belongs to the IspH family. It depends on [4Fe-4S] cluster as a cofactor.

The catalysed reaction is isopentenyl diphosphate + 2 oxidized [2Fe-2S]-[ferredoxin] + H2O = (2E)-4-hydroxy-3-methylbut-2-enyl diphosphate + 2 reduced [2Fe-2S]-[ferredoxin] + 2 H(+). It carries out the reaction dimethylallyl diphosphate + 2 oxidized [2Fe-2S]-[ferredoxin] + H2O = (2E)-4-hydroxy-3-methylbut-2-enyl diphosphate + 2 reduced [2Fe-2S]-[ferredoxin] + 2 H(+). Its pathway is isoprenoid biosynthesis; dimethylallyl diphosphate biosynthesis; dimethylallyl diphosphate from (2E)-4-hydroxy-3-methylbutenyl diphosphate: step 1/1. The protein operates within isoprenoid biosynthesis; isopentenyl diphosphate biosynthesis via DXP pathway; isopentenyl diphosphate from 1-deoxy-D-xylulose 5-phosphate: step 6/6. Functionally, catalyzes the conversion of 1-hydroxy-2-methyl-2-(E)-butenyl 4-diphosphate (HMBPP) into a mixture of isopentenyl diphosphate (IPP) and dimethylallyl diphosphate (DMAPP). Acts in the terminal step of the DOXP/MEP pathway for isoprenoid precursor biosynthesis. The sequence is that of 4-hydroxy-3-methylbut-2-enyl diphosphate reductase from Ralstonia nicotianae (strain ATCC BAA-1114 / GMI1000) (Ralstonia solanacearum).